The following is a 388-amino-acid chain: Dual-specificity RNA methyltransferase RlmN (388 aa).

The Proton acceptor role is filled by glutamate 109. The region spanning 115-354 is the Radical SAM core domain; that stretch reads EDDRATLCVS…TIVRKTRGDD (240 aa). Cysteines 122 and 359 form a disulfide. Positions 129, 133, and 136 each coordinate [4Fe-4S] cluster. Residues 183-184, serine 215, 237-239, and asparagine 316 each bind S-adenosyl-L-methionine; these read GE and SLH. The active-site S-methylcysteine intermediate is the cysteine 359.

Belongs to the radical SAM superfamily. RlmN family. [4Fe-4S] cluster serves as cofactor.

Its subcellular location is the cytoplasm. It carries out the reaction adenosine(2503) in 23S rRNA + 2 reduced [2Fe-2S]-[ferredoxin] + 2 S-adenosyl-L-methionine = 2-methyladenosine(2503) in 23S rRNA + 5'-deoxyadenosine + L-methionine + 2 oxidized [2Fe-2S]-[ferredoxin] + S-adenosyl-L-homocysteine. The catalysed reaction is adenosine(37) in tRNA + 2 reduced [2Fe-2S]-[ferredoxin] + 2 S-adenosyl-L-methionine = 2-methyladenosine(37) in tRNA + 5'-deoxyadenosine + L-methionine + 2 oxidized [2Fe-2S]-[ferredoxin] + S-adenosyl-L-homocysteine. Specifically methylates position 2 of adenine 2503 in 23S rRNA and position 2 of adenine 37 in tRNAs. m2A2503 modification seems to play a crucial role in the proofreading step occurring at the peptidyl transferase center and thus would serve to optimize ribosomal fidelity. In Salmonella arizonae (strain ATCC BAA-731 / CDC346-86 / RSK2980), this protein is Dual-specificity RNA methyltransferase RlmN.